A 200-amino-acid chain; its full sequence is Serine/arginine-rich splicing factor RSZ22 (200 aa).

The RRM domain maps to 2-71 (SRVYVGNLDP…NGWRVEQSHN (70 aa)). The span at 62 to 83 (NGWRVEQSHNRGERGGGGRGGD) shows a compositional bias: basic and acidic residues. 2 disordered regions span residues 62-97 (NGWR…RGGS) and 112-200 (RECR…RSRS). Positions 84-96 (RGGGGGGRGGRGG) are enriched in gly residues. Residues 99–116 (LKCYECGETGHFARECRN) form a CCHC-type zinc finger. The segment covering 120 to 137 (TGRRRSKSRSRTPPRYRR) has biased composition (basic residues). Phosphoserine is present on residues S138, S147, S152, S160, S162, S174, and S200. Positions 138 to 150 (SPSYGRRSYSPRA) are enriched in low complexity. The span at 151-166 (RSPPPPRRRSPSPPPA) shows a compositional bias: pro residues.

It belongs to the splicing factor SR family. RSZ subfamily. As to quaternary structure, component of the spliceosome. Interacts with AFC2, RS2Z33 and RNU1. Extensively phosphorylated on serine residues in the RS domain. Phosphorylated by AFC2. As to expression, expressed in primary and lateral roots, stems, petioles, abaxial and adaxial epidermis cells, trichomes, unopened flowers, anther filaments, anthers, stigma, pollen, pollen tube, ovule funiculi, integuments, embryo sac and developing seeds.

It localises to the nucleus speckle. The protein resides in the nucleus. The protein localises to the nucleolus. It is found in the nucleoplasm. Its subcellular location is the cytoplasm. Its function is as follows. Sequence-specific RNA-binding protein probably involved in pre-mRNA splicing. In vitro, can complement efficiently splicing-deficient mammalian SRSF7-depleted HeLa cell extract. The protein is Serine/arginine-rich splicing factor RSZ22 (RSZ22) of Arabidopsis thaliana (Mouse-ear cress).